The chain runs to 915 residues: Metabotropic glutamate receptor 7 (915 aa).

Positions 1–34 are cleaved as a signal peptide; it reads MVQLRKLLRVLTLMKFPCCVLEVLLCALAAAARG. The Extracellular segment spans residues 35 to 590; the sequence is QEMYAPHSIR…IIKLEWHSPW (556 aa). The cysteines at positions 67 and 109 are disulfide-linked. Asn98 carries an N-linked (GlcNAc...) asparagine glycan. L-glutamate is bound by residues Ser159, 180–182, Tyr230, and Asp314; that span reads AST. 7 disulfide bridges follow: Cys249–Cys541, Cys374–Cys390, Cys430–Cys437, Cys523–Cys542, Cys527–Cys545, Cys548–Cys560, and Cys563–Cys576. Residue Lys407 coordinates L-glutamate. N-linked (GlcNAc...) asparagine glycosylation is found at Asn458 and Asn486. The N-linked (GlcNAc...) asparagine glycan is linked to Asn572. Residues 591–615 form a helical membrane-spanning segment; the sequence is AVIPVFLAMLGIIATIFVMATFIRY. Residues 616-627 lie on the Cytoplasmic side of the membrane; that stretch reads NDTPIVRASGRE. Residues 628-648 traverse the membrane as a helical segment; sequence LSYVLLTGIFLCYIITFLMIA. Residues 649–654 are Extracellular-facing; that stretch reads KPDVAV. A helical membrane pass occupies residues 655–675; the sequence is CSFRRVFLGLGMCISYAALLT. Residues 676-702 lie on the Cytoplasmic side of the membrane; sequence KTNRIYRIFEQGKKSVTAPRLISPTSQ. A helical transmembrane segment spans residues 703-723; sequence LAITSSLISVQLLGVFIWFGV. Residues 724-753 are Extracellular-facing; the sequence is DPPNIIIDYDEHKTMNPEQARGVLKCDITD. The helical transmembrane segment at 754–775 threads the bilayer; the sequence is LQIICSLGYSILLMVTCTVYAI. Residues 776–788 lie on the Cytoplasmic side of the membrane; it reads KTRGVPENFNEAK. Residues 789-810 form a helical membrane-spanning segment; the sequence is PIGFTMYTTCIVWLAFIPIFFG. Topologically, residues 811-825 are extracellular; that stretch reads TAQSAEKLYIQTTTL. Residues 826–850 form a helical membrane-spanning segment; the sequence is TISMNLSASVALGMLYMPKVYIIIF. The Cytoplasmic segment spans residues 851–915; it reads HPELNVQKRK…KYVSYNNLVI (65 aa). Residues 874-895 form a disordered region; it reads SRLSHKPSDRPNGEAKTELCEN. Over residues 879–892 the composition is skewed to basic and acidic residues; that stretch reads KPSDRPNGEAKTEL. Ser900 is subject to Phosphoserine.

Belongs to the G-protein coupled receptor 3 family. Homodimer. Interacts with PICK1. Post-translationally, N-glycosylated. As to expression, expressed in many areas of the brain, especially in the cerebral cortex, hippocampus, and cerebellum. Expression of GRM7 isoforms in non-neuronal tissues appears to be restricted to isoform 3 and isoform 4.

The protein localises to the cell membrane. Functionally, G-protein coupled receptor activated by glutamate that regulates axon outgrowth through the MAPK-cAMP-PKA signaling pathway during neuronal development. Ligand binding causes a conformation change that triggers signaling via guanine nucleotide-binding proteins (G proteins) and modulates the activity of downstream effectors, such as adenylate cyclase that it inhibits. In Homo sapiens (Human), this protein is Metabotropic glutamate receptor 7 (GRM7).